We begin with the raw amino-acid sequence, 311 residues long: Giardin subunit alpha-8 (311 aa).

Annexin repeat units follow at residues 5 to 73, 75 to 146, 154 to 223, and 227 to 295; these read RKAY…IRCW, NRHE…DRWM, NNVK…AAHY, and EPSK…SLWR.

It belongs to the annexin family. Giardin subunit alpha subfamily.

The protein resides in the cytoplasm. The protein localises to the cytoskeleton. Giardins are involved in parasite attachment to the intestinal mucosa and in the cytoskeletal disassembly and reassembly that marks the transition from infectious trophozoite to transmissible cyst. They may interact with other cytoskeletal proteins such as microtubules in the microribbons or crossbridges, to maintain the integrity of the ventral disk. The sequence is that of Giardin subunit alpha-8 from Giardia intestinalis (Giardia lamblia).